A 239-amino-acid chain; its full sequence is MTEAATGPEGADPSRAARSLPGRPPGIRADSSGLTDRQRRVIEVIRDSVQRRGYPPSMREIGQAVGLSSTSSVAHQLMALERKGFLRRDPHRPRAYEVRGSDQPSAQPADTSGKPAASYVPLVGRIAAGGPILAEESVEDVFPLPRQLVGDGELFVLKVVGDSMIEAAICDGDWVTVRRQPVAENGDIVAAMLDGEATVKRFKRENGHVWLLPHNAAYQPIPGDDATILGKVVAVLRRV.

The disordered stretch occupies residues 1 to 40 (MTEAATGPEGADPSRAARSLPGRPPGIRADSSGLTDRQRR). Residues 58 to 78 (MREIGQAVGLSSTSSVAHQLM) constitute a DNA-binding region (H-T-H motif). Residues 89–100 (DPHRPRAYEVRG) are compositionally biased toward basic and acidic residues. Positions 89 to 116 (DPHRPRAYEVRGSDQPSAQPADTSGKPA) are disordered. Active-site for autocatalytic cleavage activity residues include Ser163 and Lys200.

Belongs to the peptidase S24 family. Homodimer.

It carries out the reaction Hydrolysis of Ala-|-Gly bond in repressor LexA.. Represses a number of genes involved in the response to DNA damage (SOS response), including recA and lexA. In the presence of single-stranded DNA, RecA interacts with LexA causing an autocatalytic cleavage which disrupts the DNA-binding part of LexA, leading to derepression of the SOS regulon and eventually DNA repair. The chain is LexA repressor from Streptomyces clavuligerus.